Consider the following 306-residue polypeptide: Beta-lactamase (306 aa).

The first 36 residues, 1–36, serve as a signal peptide directing secretion; the sequence is MKLKTKASIKFGICVGLLCLSITGFTPFFNSTHAEA. S89 functions as the Acyl-ester intermediate in the catalytic mechanism. 251–253 contacts substrate; that stretch reads KSG.

Belongs to the class-A beta-lactamase family.

Its subcellular location is the secreted. The catalysed reaction is a beta-lactam + H2O = a substituted beta-amino acid. This protein is a beta-lactamase with a substrate specificity for penicillins. The protein is Beta-lactamase (penP) of Bacillus subtilis (strain 168).